The primary structure comprises 156 residues: ATP synthase subunit b (156 aa).

A helical transmembrane segment spans residues 7–26 (FIGQMVAFAIFIYLTYRYVW).

The protein belongs to the ATPase B chain family. As to quaternary structure, F-type ATPases have 2 components, F(1) - the catalytic core - and F(0) - the membrane proton channel. F(1) has five subunits: alpha(3), beta(3), gamma(1), delta(1), epsilon(1). F(0) has three main subunits: a(1), b(2) and c(10-14). The alpha and beta chains form an alternating ring which encloses part of the gamma chain. F(1) is attached to F(0) by a central stalk formed by the gamma and epsilon chains, while a peripheral stalk is formed by the delta and b chains.

The protein localises to the cell inner membrane. Functionally, f(1)F(0) ATP synthase produces ATP from ADP in the presence of a proton or sodium gradient. F-type ATPases consist of two structural domains, F(1) containing the extramembraneous catalytic core and F(0) containing the membrane proton channel, linked together by a central stalk and a peripheral stalk. During catalysis, ATP synthesis in the catalytic domain of F(1) is coupled via a rotary mechanism of the central stalk subunits to proton translocation. In terms of biological role, component of the F(0) channel, it forms part of the peripheral stalk, linking F(1) to F(0). The sequence is that of ATP synthase subunit b from Cellvibrio japonicus (strain Ueda107) (Pseudomonas fluorescens subsp. cellulosa).